Here is a 130-residue protein sequence, read N- to C-terminus: Small ribosomal subunit protein uS9 (130 aa).

Belongs to the universal ribosomal protein uS9 family.

The polypeptide is Small ribosomal subunit protein uS9 (Streptococcus gordonii (strain Challis / ATCC 35105 / BCRC 15272 / CH1 / DL1 / V288)).